Reading from the N-terminus, the 155-residue chain is Egg-lysin (155 aa).

The first 18 residues, methionine 1–serine 18, serve as a signal peptide directing secretion.

Monomer. Homodimer. Molecules associate into dimers and then rapidly dissociate again. Interacts (as a monomer) with the egg vitelline layer protein VERL (via VERL repeats); each VERL chain can bind multiple copies of lysin. As to expression, sperm (at protein level).

The protein resides in the cytoplasmic vesicle. Its subcellular location is the secretory vesicle. The protein localises to the acrosome lumen. Functionally, creates a 3 um hole in the egg vitelline layer through which the sperm passes. Does not have enzyme activity. Species-specific interaction between the sperm protein lysin and the egg protein VERL exposes a basic surface on lysin that may dissociate the egg vitelline layer via electrostatic repulsion. Plays a role in ensuring species-specific fertilization. The polypeptide is Egg-lysin (Haliotis corrugata (Pink abalone)).